We begin with the raw amino-acid sequence, 349 residues long: MPSPIPFNSFLPLELSPSADLRPCSSPVVIPGKDGKAFLGGTPSPRTRRLPPRLAWCSIDWDRLCLLQPLGSGGFGAVYKATYHGVTVAVKQVKKSSKNRLASRQSFWAELNVARLQHDNVVRVVAASTCAPASQNSLGTIIMEYVGNVTLHHVIYGTRDAWRQGEEEEGGCGRKALSMAEAVCYSCDIVTGLAFLHSQGIVHLDLKPANILITEHGACKIGDFGCSQRLEEGLSQSHHVCQQGGTYTHRAPELLKGERVTAKADIYSFAITLWQIVMREQPYLGERQYVLYAVVAYNLRPPLAAAIFHESAVGQRLRSIISCCWKADVEERLSAAQLLPSLRALKENL.

The Protein kinase domain maps to 64–345; the sequence is LCLLQPLGSG…AQLLPSLRAL (282 aa). ATP contacts are provided by residues 70-78 and Lys91; that span reads LGSGGFGAV. The Proton acceptor role is filled by Asp205.

The protein belongs to the protein kinase superfamily. Ser/Thr protein kinase family.

The protein resides in the cytoplasm. The enzyme catalyses L-seryl-[protein] + ATP = O-phospho-L-seryl-[protein] + ADP + H(+). The catalysed reaction is L-threonyl-[protein] + ATP = O-phospho-L-threonyl-[protein] + ADP + H(+). Serine/threonine kinase involved in the regulation of MAPK signaling. In Gallus gallus (Chicken), this protein is Serine/threonine-protein kinase mos (MOS).